A 624-amino-acid polypeptide reads, in one-letter code: MEASTSLLVLVLAAAAFAAGTVTEAAGDGCSAGCDLALASFYVTPNQNVTNMADLFGIGAANYRSLAPYNPNIPNLDFINVGGRVNVYFTCGCRSLPGSPGATYLAGAFPFQMSRGQIYTSVAANYNNLTTAEWLQATNSYPANNIPDTAVINATVNCSCGDASISPDYGLFLTYPLRAEDTLASVAATYGLSSQLDVVRRYNPGMESATGSGIVYIPVKDPNGSYLPLKSPGKGASAGAIAGGVVAGVVVLAAIFLYIIFYRRRKAKQATLLQSSEDSTQLGTISMDKVTPSTIVGPSPVAGITVDKSVEFSYEELSNATQGFSIGNKIGQGGFGAVYYAELRGEKAAIKKMDMQATHEFLAELKVLTHVHHLNLVRLIGYCIESSLFLVYEFIENGNLSQHLRGMGYEPLSWAARIQIALDSARGLEYIHEHTVPVYIHRDIKSANILIDKNYRAKVADFGLTKLTEVGGTSMPTGTRVVGTFGYMPPEYARYGDVSPKVDVYAFGVVLYELISAKEAIVRSTESSSDSKGLVYLFEEALNSPDPKEGLRTLIDPKLGEDYPIDSILKLTQLAKVCTQEDPKLRPSMRSVVVALMTLSSTSEFWDMNNLYENQGLVNLMSGR.

A signal peptide spans 1–18 (MEASTSLLVLVLAAAAFA). Residues 19-240 (AGTVTEAAGD…SPGKGASAGA (222 aa)) lie on the Extracellular side of the membrane. 3 disulfides stabilise this stretch: cysteine 30-cysteine 93, cysteine 34-cysteine 160, and cysteine 91-cysteine 158. N-linked (GlcNAc...) asparagine glycosylation occurs at asparagine 48. 115 to 121 (RGQIYTS) contributes to the chitin binding site. N-linked (GlcNAc...) asparagine glycosylation is present at asparagine 128. Residue 142–148 (PANNIPD) participates in chitin binding. Asparagine 153 and asparagine 157 each carry an N-linked (GlcNAc...) asparagine glycan. Residues 173–218 (LTYPLRAEDTLASVAATYGLSSQLDVVRRYNPGMESATGSGIVYIP) enclose the LysM domain. N-linked (GlcNAc...) asparagine glycosylation occurs at asparagine 223. The chain crosses the membrane as a helical span at residues 241–261 (IAGGVVAGVVVLAAIFLYIIF). The Cytoplasmic portion of the chain corresponds to 262–624 (YRRRKAKQAT…QGLVNLMSGR (363 aa)). In terms of domain architecture, Protein kinase spans 324-599 (FSIGNKIGQG…RSVVVALMTL (276 aa)). Residues 330 to 338 (IGQGGFGAV) and lysine 351 contribute to the ATP site. Aspartate 443 functions as the Proton acceptor in the catalytic mechanism.

The protein belongs to the protein kinase superfamily. Ser/Thr protein kinase family. As to quaternary structure, homooligomer. Interacts with CEBIP. Interacts with LYP4 and LYP6. Interacts with RLCK176. In terms of processing, autophosphorylated; induced by chitin and derivatives. As to expression, expressed in seedlings, roots, shoots and stems, and, to a lower extent, in flowers.

The protein resides in the cell membrane. The catalysed reaction is L-seryl-[protein] + ATP = O-phospho-L-seryl-[protein] + ADP + H(+). It catalyses the reaction L-threonyl-[protein] + ATP = O-phospho-L-threonyl-[protein] + ADP + H(+). Its function is as follows. Lysin motif (LysM) receptor kinase required as a cell surface receptor for chitin elicitor (chitooligosaccharides) signaling leading to innate immunity in response to biotic stresses. Involved in the resistance to pathogenic fungi, probably by sensing microbe-associated molecular patterns (MAMP) and pathogen-associated molecular patterns (PAMP). Involved in the detection of microbial peptidoglycans (PGNs) and mediates PGN response. Plays dual roles in PGN and chitin signaling during innate immunity. Acts as an adapter for LYP4 and LYP6 and mediates signal transduction from the extracellular to intracellular spaces. Participates in the activation of defense genes during response to PGN and chitin. Phosphorylates the downstream partner RLCK185 in response to chitin elicitation. The chain is Chitin elicitor receptor kinase 1 from Oryza sativa subsp. japonica (Rice).